Reading from the N-terminus, the 742-residue chain is Photosystem I P700 chlorophyll a apoprotein A2 (742 aa).

Transmembrane regions (helical) follow at residues 46 to 69 (LFST…FHIA), 135 to 158 (LFQA…LHLQ), 175 to 199 (LNHH…HVAI), 273 to 291 (IAHH…GHMY), 336 to 359 (LHFQ…QHMG), 375 to 401 (SALY…IFFV), 423 to 445 (ALIS…IYVH), and 525 to 543 (FLVH…LILI). [4Fe-4S] cluster is bound by residues cysteine 567 and cysteine 576. The next 2 helical transmembrane spans lie at 583 to 604 (AMYL…YWHW) and 651 to 673 (LSVW…MFLI). The divinyl chlorophyll a site is built by histidine 662, methionine 670, and tyrosine 678. Position 679 (tryptophan 679) interacts with phylloquinone. The helical transmembrane segment at 715–735 (LVGLAHFTIGNILTFGAFVIA) threads the bilayer.

This sequence belongs to the PsaA/PsaB family. As to quaternary structure, the PsaA/B heterodimer binds the P700 divinyl chlorophyll special pair and subsequent electron acceptors. PSI consists of a core antenna complex that captures photons, and an electron transfer chain that converts photonic excitation into a charge separation. The cyanobacterial PSI reaction center is composed of one copy each of PsaA,B,C,D,E,F,I,J,K,L,M and X, and forms trimeric complexes. PSI electron transfer chain: 5 divinyl chlorophyll a, 1 divinyl chlorophyll a', 2 phylloquinones and 3 4Fe-4S clusters. PSI core antenna: 90 divinyl chlorophyll a, 22 carotenoids, 3 phospholipids and 1 galactolipid. P700 is a divinyl chlorophyll a/divinyl chlorophyll a' dimer, A0 is one or more divinyl chlorophyll a, A1 is one or both phylloquinones and FX is a shared 4Fe-4S iron-sulfur center. is required as a cofactor.

The protein localises to the cellular thylakoid membrane. It catalyses the reaction reduced [plastocyanin] + hnu + oxidized [2Fe-2S]-[ferredoxin] = oxidized [plastocyanin] + reduced [2Fe-2S]-[ferredoxin]. Its function is as follows. PsaA and PsaB bind P700, the primary electron donor of photosystem I (PSI), as well as the electron acceptors A0, A1 and FX. PSI is a plastocyanin/cytochrome c6-ferredoxin oxidoreductase, converting photonic excitation into a charge separation, which transfers an electron from the donor P700 chlorophyll pair to the spectroscopically characterized acceptors A0, A1, FX, FA and FB in turn. Oxidized P700 is reduced on the lumenal side of the thylakoid membrane by plastocyanin or cytochrome c6. This chain is Photosystem I P700 chlorophyll a apoprotein A2, found in Prochlorococcus marinus subsp. pastoris (strain CCMP1986 / NIES-2087 / MED4).